Here is a 642-residue protein sequence, read N- to C-terminus: Chaperone protein DnaK (642 aa).

Thr-198 is modified (phosphothreonine; by autocatalysis). The tract at residues 602-642 (EAAGGAEAEAAAGGHGGASGSHDDKVVDADFEEVDGDKKGK) is disordered. Positions 603–613 (AAGGAEAEAAA) are enriched in low complexity.

The protein belongs to the heat shock protein 70 family.

Its function is as follows. Acts as a chaperone. The sequence is that of Chaperone protein DnaK from Paramagnetospirillum magneticum (strain ATCC 700264 / AMB-1) (Magnetospirillum magneticum).